We begin with the raw amino-acid sequence, 248 residues long: DNA repair protein RecO (248 aa).

Belongs to the RecO family.

Involved in DNA repair and RecF pathway recombination. In Bacillus mycoides (strain KBAB4) (Bacillus weihenstephanensis), this protein is DNA repair protein RecO.